We begin with the raw amino-acid sequence, 244 residues long: LOB domain-containing protein 17 (244 aa).

One can recognise an LOB domain in the interval 6-108 (SPCGACKFLR…TQLEILKQQA (103 aa)).

This sequence belongs to the LOB domain-containing protein family. Expressed in roots, stems, leaves and flowers.

In Arabidopsis thaliana (Mouse-ear cress), this protein is LOB domain-containing protein 17 (LBD17).